Consider the following 1148-residue polypeptide: Autophagy-related protein 11 (1148 aa).

The short motif at 567 to 570 (FDDI) is the AIM (Atg8-family-interacting motif) element. Residues 699–710 (KAEASSDVEGNK) are compositionally biased toward basic and acidic residues. Disordered regions lie at residues 699-727 (KAEA…CVSN), 754-777 (PLDS…EAGE), and 784-803 (NSST…ATGR). Composition is skewed to polar residues over residues 754-767 (PLDS…QNNE) and 784-793 (NSSTAESPQK). Coiled coils occupy residues 816–868 (ELRN…HLEN) and 956–996 (DKVS…VKTL). At threonine 851 the chain carries Phosphothreonine. The short motif at 1130–1133 (YFIV) is the AIM (Atg8-family-interacting motif) element.

This sequence belongs to the ATG11 family. In terms of assembly, homodimer. Interacts with ATG8E, ATG13A and ATG101. Binds to ATG8E on autophagic vesicles.

Its subcellular location is the cytoplasmic vesicle. It localises to the autophagosome. Functionally, accessory protein involved in autophagy. Acts as a scaffold protein of the ATG1-ATG13 complex for faithful delivery of autophagic vesicles to the vacuole. Involved in the stress-induced phosphorylation of ATG1A for turnover of ATG1-ATG13 complex and proper ATG1-ATG13 complex assembly or activity. Required for selective mitophagy. Required for senescence-induced breakdown of mitochondria-resident proteins and mitochondrial vesicles. Seems not essential for ATG8-mediated autophagy. The sequence is that of Autophagy-related protein 11 from Arabidopsis thaliana (Mouse-ear cress).